A 294-amino-acid polypeptide reads, in one-letter code: uncharacterized protein (294 aa).

The chain crosses the membrane as a helical span at residues 5–25 (ILIILIIIIIVIISLIYLKNF). 4 N-linked (GlcNAc...) asparagine; by host glycosylation sites follow: Asn-151, Asn-170, Asn-205, and Asn-271.

Its subcellular location is the membrane. This is an uncharacterized protein from Acanthamoeba polyphaga (Amoeba).